Here is a 251-residue protein sequence, read N- to C-terminus: Retinoic acid early-inducible protein 1-epsilon (251 aa).

Positions 1–28 (MAKAAVTKRHHFMIQKLLILLSYGYTNG) are cleaved as a signal peptide. An intrachain disulfide couples cysteine 37 to cysteine 56. 5 N-linked (GlcNAc...) asparagine glycosylation sites follow: asparagine 38, asparagine 70, asparagine 83, asparagine 141, and asparagine 154. Cysteines 88 and 188 form a disulfide. Residues 196 to 228 (LKQSKEKPRSTSRSPSITQLTSTSPLPPPSHST) are disordered. The segment covering 209–219 (SPSITQLTSTS) has biased composition (low complexity). Residue serine 225 is the site of GPI-anchor amidated serine attachment. Positions 226-251 (HSTSKKGFISVGLIFISLLFAFAFAM) are cleaved as a propeptide — removed in mature form.

This sequence belongs to the NKG2D ligand family. Post-translationally, glycosylated.

The protein localises to the cell membrane. Its function is as follows. Acts as a ligand for KLRK1. The sequence is that of Retinoic acid early-inducible protein 1-epsilon (Raet1e) from Mus musculus (Mouse).